The sequence spans 382 residues: Per os infectivity factor 2 (382 aa).

As to quaternary structure, forms the PIF complex together with PIF1 and PIF3. The complex also interacts with per os infectivity factor PIF0.

In terms of biological role, per os infectivity factor that mediates the specific binding of occluded virions (ODV) to the host midgut target cells. The protein is Per os infectivity factor 2 of Autographa californica nuclear polyhedrosis virus (AcMNPV).